Reading from the N-terminus, the 133-residue chain is ATP synthase epsilon chain, chloroplastic (133 aa).

It belongs to the ATPase epsilon chain family. F-type ATPases have 2 components, CF(1) - the catalytic core - and CF(0) - the membrane proton channel. CF(1) has five subunits: alpha(3), beta(3), gamma(1), delta(1), epsilon(1). CF(0) has three main subunits: a, b and c.

It localises to the plastid. It is found in the chloroplast thylakoid membrane. In terms of biological role, produces ATP from ADP in the presence of a proton gradient across the membrane. This is ATP synthase epsilon chain, chloroplastic from Nicotiana tomentosiformis (Tobacco).